Reading from the N-terminus, the 786-residue chain is LPS-assembly protein LptD (786 aa).

An N-terminal signal peptide occupies residues 1–24 (MKKRIPTLLATMIASALYSHQGLA). Cystine bridges form between cysteine 31-cysteine 726 and cysteine 173-cysteine 727.

It belongs to the LptD family. Component of the lipopolysaccharide transport and assembly complex. Interacts with LptE and LptA. Post-translationally, contains two intramolecular disulfide bonds.

It is found in the cell outer membrane. Functionally, together with LptE, is involved in the assembly of lipopolysaccharide (LPS) at the surface of the outer membrane. This chain is LPS-assembly protein LptD, found in Salmonella choleraesuis (strain SC-B67).